A 322-amino-acid chain; its full sequence is 4-hydroxy-3-methylbut-2-enyl diphosphate reductase (322 aa).

Cys-15 serves as a coordination point for [4Fe-4S] cluster. (2E)-4-hydroxy-3-methylbut-2-enyl diphosphate is bound by residues His-44 and His-77. His-44 and His-77 together coordinate dimethylallyl diphosphate. The isopentenyl diphosphate site is built by His-44 and His-77. A [4Fe-4S] cluster-binding site is contributed by Cys-99. Residue His-127 participates in (2E)-4-hydroxy-3-methylbut-2-enyl diphosphate binding. His-127 contacts dimethylallyl diphosphate. His-127 provides a ligand contact to isopentenyl diphosphate. Glu-129 acts as the Proton donor in catalysis. Thr-168 is a (2E)-4-hydroxy-3-methylbut-2-enyl diphosphate binding site. Cys-198 provides a ligand contact to [4Fe-4S] cluster. Ser-226, Ser-227, Asn-228, and Ser-270 together coordinate (2E)-4-hydroxy-3-methylbut-2-enyl diphosphate. The dimethylallyl diphosphate site is built by Ser-226, Ser-227, Asn-228, and Ser-270. Residues Ser-226, Ser-227, Asn-228, and Ser-270 each contribute to the isopentenyl diphosphate site.

It belongs to the IspH family. The cofactor is [4Fe-4S] cluster.

The enzyme catalyses isopentenyl diphosphate + 2 oxidized [2Fe-2S]-[ferredoxin] + H2O = (2E)-4-hydroxy-3-methylbut-2-enyl diphosphate + 2 reduced [2Fe-2S]-[ferredoxin] + 2 H(+). It catalyses the reaction dimethylallyl diphosphate + 2 oxidized [2Fe-2S]-[ferredoxin] + H2O = (2E)-4-hydroxy-3-methylbut-2-enyl diphosphate + 2 reduced [2Fe-2S]-[ferredoxin] + 2 H(+). The protein operates within isoprenoid biosynthesis; dimethylallyl diphosphate biosynthesis; dimethylallyl diphosphate from (2E)-4-hydroxy-3-methylbutenyl diphosphate: step 1/1. It functions in the pathway isoprenoid biosynthesis; isopentenyl diphosphate biosynthesis via DXP pathway; isopentenyl diphosphate from 1-deoxy-D-xylulose 5-phosphate: step 6/6. In terms of biological role, catalyzes the conversion of 1-hydroxy-2-methyl-2-(E)-butenyl 4-diphosphate (HMBPP) into a mixture of isopentenyl diphosphate (IPP) and dimethylallyl diphosphate (DMAPP). Acts in the terminal step of the DOXP/MEP pathway for isoprenoid precursor biosynthesis. The sequence is that of 4-hydroxy-3-methylbut-2-enyl diphosphate reductase from Neisseria meningitidis serogroup C (strain 053442).